A 441-amino-acid chain; its full sequence is Amino-acid acetyltransferase (441 aa).

The 140-residue stretch at 295–434 folds into the N-acetyltransferase domain; sequence EQVRRATIND…QELYNYQRRS (140 aa).

Belongs to the acetyltransferase family. ArgA subfamily. Homohexamer.

It localises to the cytoplasm. The catalysed reaction is L-glutamate + acetyl-CoA = N-acetyl-L-glutamate + CoA + H(+). Its pathway is amino-acid biosynthesis; L-arginine biosynthesis; N(2)-acetyl-L-ornithine from L-glutamate: step 1/4. The protein is Amino-acid acetyltransferase of Yersinia enterocolitica serotype O:8 / biotype 1B (strain NCTC 13174 / 8081).